The chain runs to 262 residues: 5'-nucleotidase SurE (262 aa).

The a divalent metal cation site is built by D8, D9, S40, and N92.

Belongs to the SurE nucleotidase family. It depends on a divalent metal cation as a cofactor.

It is found in the cytoplasm. It catalyses the reaction a ribonucleoside 5'-phosphate + H2O = a ribonucleoside + phosphate. Functionally, nucleotidase that shows phosphatase activity on nucleoside 5'-monophosphates. In Xylella fastidiosa (strain 9a5c), this protein is 5'-nucleotidase SurE.